A 330-amino-acid polypeptide reads, in one-letter code: Phospho-N-acetylmuramoyl-pentapeptide-transferase (330 aa).

9 consecutive transmembrane segments (helical) span residues 13 to 33 (VFVF…LIPM), 58 to 78 (PTMG…FYAG), 83 to 103 (ILPL…DDFI), 113 to 133 (LYWN…AVYL), 152 to 172 (VSLG…STNA), 179 to 199 (LDGL…IVAM), 209 to 229 (MFSA…AYPA), 231 to 250 (IFMG…AIAI), and 304 to 324 (VKVV…GFFA).

The protein belongs to the glycosyltransferase 4 family. MraY subfamily. Requires Mg(2+) as cofactor.

It localises to the cell membrane. The catalysed reaction is UDP-N-acetyl-alpha-D-muramoyl-L-alanyl-gamma-D-glutamyl-meso-2,6-diaminopimeloyl-D-alanyl-D-alanine + di-trans,octa-cis-undecaprenyl phosphate = di-trans,octa-cis-undecaprenyl diphospho-N-acetyl-alpha-D-muramoyl-L-alanyl-D-glutamyl-meso-2,6-diaminopimeloyl-D-alanyl-D-alanine + UMP. The protein operates within cell wall biogenesis; peptidoglycan biosynthesis. Functionally, catalyzes the initial step of the lipid cycle reactions in the biosynthesis of the cell wall peptidoglycan: transfers peptidoglycan precursor phospho-MurNAc-pentapeptide from UDP-MurNAc-pentapeptide onto the lipid carrier undecaprenyl phosphate, yielding undecaprenyl-pyrophosphoryl-MurNAc-pentapeptide, known as lipid I. This chain is Phospho-N-acetylmuramoyl-pentapeptide-transferase, found in Acetivibrio thermocellus (strain ATCC 27405 / DSM 1237 / JCM 9322 / NBRC 103400 / NCIMB 10682 / NRRL B-4536 / VPI 7372) (Clostridium thermocellum).